A 130-amino-acid chain; its full sequence is Peptide methionine sulfoxide reductase MsrB (130 aa).

The 122-residue stretch at 1-122 (MKKREDMTEM…NSVSMAFEDS (122 aa)) folds into the MsrB domain. Zn(2+) contacts are provided by cysteine 39, cysteine 42, cysteine 88, and cysteine 91. Cysteine 111 (nucleophile) is an active-site residue.

This sequence belongs to the MsrB Met sulfoxide reductase family. Zn(2+) is required as a cofactor.

The catalysed reaction is L-methionyl-[protein] + [thioredoxin]-disulfide + H2O = L-methionyl-(R)-S-oxide-[protein] + [thioredoxin]-dithiol. This Pasteurella multocida (strain Pm70) protein is Peptide methionine sulfoxide reductase MsrB.